The primary structure comprises 381 residues: Anhydro-N-acetylmuramic acid kinase (381 aa).

22–29 provides a ligand contact to ATP; sequence GTSIDGID.

The protein belongs to the anhydro-N-acetylmuramic acid kinase family.

It catalyses the reaction 1,6-anhydro-N-acetyl-beta-muramate + ATP + H2O = N-acetyl-D-muramate 6-phosphate + ADP + H(+). It functions in the pathway amino-sugar metabolism; 1,6-anhydro-N-acetylmuramate degradation. Its pathway is cell wall biogenesis; peptidoglycan recycling. Functionally, catalyzes the specific phosphorylation of 1,6-anhydro-N-acetylmuramic acid (anhMurNAc) with the simultaneous cleavage of the 1,6-anhydro ring, generating MurNAc-6-P. Is required for the utilization of anhMurNAc either imported from the medium or derived from its own cell wall murein, and thus plays a role in cell wall recycling. This is Anhydro-N-acetylmuramic acid kinase from Xylella fastidiosa (strain Temecula1 / ATCC 700964).